Reading from the N-terminus, the 245-residue chain is tRNA1(Val) (adenine(37)-N6)-methyltransferase (245 aa).

The protein belongs to the methyltransferase superfamily. tRNA (adenine-N(6)-)-methyltransferase family.

Its subcellular location is the cytoplasm. It catalyses the reaction adenosine(37) in tRNA1(Val) + S-adenosyl-L-methionine = N(6)-methyladenosine(37) in tRNA1(Val) + S-adenosyl-L-homocysteine + H(+). Functionally, specifically methylates the adenine in position 37 of tRNA(1)(Val) (anticodon cmo5UAC). This is tRNA1(Val) (adenine(37)-N6)-methyltransferase from Enterobacter sp. (strain 638).